The following is a 302-amino-acid chain: Protoheme IX farnesyltransferase 2 (302 aa).

A run of 9 helical transmembrane segments spans residues 14 to 34 (IIFG…QGSV), 36 to 56 (WWLL…GCAI), 85 to 105 (AALA…WFCT), 108 to 128 (LATG…SLYM), 133 to 153 (VYGT…GYCA), 163 to 183 (AILL…IAIF), 209 to 229 (IVLY…GGYA), 230 to 250 (GYGY…MALS), and 264 to 284 (QVFF…AVDG).

Belongs to the UbiA prenyltransferase family. Protoheme IX farnesyltransferase subfamily.

It is found in the cell inner membrane. It carries out the reaction heme b + (2E,6E)-farnesyl diphosphate + H2O = Fe(II)-heme o + diphosphate. The protein operates within porphyrin-containing compound metabolism; heme O biosynthesis; heme O from protoheme: step 1/1. Converts heme B (protoheme IX) to heme O by substitution of the vinyl group on carbon 2 of heme B porphyrin ring with a hydroxyethyl farnesyl side group. The sequence is that of Protoheme IX farnesyltransferase 2 from Chromobacterium violaceum (strain ATCC 12472 / DSM 30191 / JCM 1249 / CCUG 213 / NBRC 12614 / NCIMB 9131 / NCTC 9757 / MK).